We begin with the raw amino-acid sequence, 519 residues long: Xylose import ATP-binding protein XylG (519 aa).

2 consecutive ABC transporter domains span residues 6–245 (MTMR…VGRE) and 262–507 (FEAR…IRPV). 38-45 (GENGAGKS) provides a ligand contact to ATP.

Belongs to the ABC transporter superfamily. Xylose importer (TC 3.A.1.2.4) family. The complex is composed of two ATP-binding proteins (XylG), two transmembrane proteins (XylH) and a solute-binding protein (XylF).

It localises to the cell inner membrane. It carries out the reaction D-xylose(out) + ATP + H2O = D-xylose(in) + ADP + phosphate + H(+). Functionally, part of the ABC transporter complex XylFGH involved in xylose import. Responsible for energy coupling to the transport system. This chain is Xylose import ATP-binding protein XylG, found in Paraburkholderia xenovorans (strain LB400).